A 322-amino-acid chain; its full sequence is Delta-aminolevulinic acid dehydratase (322 aa).

The Zn(2+) site is built by cysteine 120, cysteine 122, and cysteine 130. Lysine 195 serves as the catalytic Schiff-base intermediate with substrate. 5-aminolevulinate contacts are provided by arginine 205 and arginine 217. Glutamate 233 lines the Mg(2+) pocket. Lysine 248 functions as the Schiff-base intermediate with substrate in the catalytic mechanism. 5-aminolevulinate is bound by residues serine 274 and tyrosine 312.

This sequence belongs to the ALAD family. In terms of assembly, homooctamer. It depends on Zn(2+) as a cofactor.

The catalysed reaction is 2 5-aminolevulinate = porphobilinogen + 2 H2O + H(+). It functions in the pathway porphyrin-containing compound metabolism; protoporphyrin-IX biosynthesis; coproporphyrinogen-III from 5-aminolevulinate: step 1/4. Functionally, catalyzes an early step in the biosynthesis of tetrapyrroles. Binds two molecules of 5-aminolevulinate per subunit, each at a distinct site, and catalyzes their condensation to form porphobilinogen. The polypeptide is Delta-aminolevulinic acid dehydratase (hemB) (Archaeoglobus fulgidus (strain ATCC 49558 / DSM 4304 / JCM 9628 / NBRC 100126 / VC-16)).